The chain runs to 72 residues: General transcription factor IIH subunit 5 (72 aa).

This sequence belongs to the TFB5 family. In terms of assembly, component of the 7-subunit TFIIH core complex composed of XPB/repB, XPD/repD, gtf2h1, gtf2h2, gtf2h3, gtf2h4 and gtf2h5, which is active in NER. The core complex associates with the 3-subunit CDK-activating kinase (CAK) module composed of cycH/cyclin H, cdk7 and mnat1 to form the 10-subunit holoenzyme (holo-TFIIH) active in transcription.

Its subcellular location is the nucleus. Functionally, component of the general transcription and DNA repair factor IIH (TFIIH) core complex, which is involved in general and transcription-coupled nucleotide excision repair (NER) of damaged DNA and, when complexed to CAK, in RNA transcription by RNA polymerase II. In NER, TFIIH acts by opening DNA around the lesion to allow the excision of the damaged oligonucleotide and its replacement by a new DNA fragment. In transcription, TFIIH has an essential role in transcription initiation. When the pre-initiation complex (PIC) has been established, TFIIH is required for promoter opening and promoter escape. Phosphorylation of the C-terminal tail (CTD) of the largest subunit of RNA polymerase II by the kinase module CAK controls the initiation of transcription. This is General transcription factor IIH subunit 5 (gtf2h5) from Dictyostelium discoideum (Social amoeba).